A 364-amino-acid chain; its full sequence is Sorbitol dehydrogenase (364 aa).

Residue Cys-54 coordinates Zn(2+). A substrate-binding site is contributed by Tyr-60. His-79 and Glu-80 together coordinate Zn(2+). Residue Glu-165 coordinates substrate. Residues Ile-193, Asp-213, Arg-218, 284-286, and 308-310 contribute to the NAD(+) site; these read VGM and VFR. Arg-310 and Tyr-311 together coordinate substrate.

It belongs to the zinc-containing alcohol dehydrogenase family. Homotetramer. Requires Zn(2+) as cofactor. As to expression, mostly expressed in dry seeds and leaves, and, to a lower extent, in roots, stems, flowers and siliques (at protein level).

The protein resides in the mitochondrion membrane. It is found in the cell membrane. The protein localises to the cytoplasm. Its subcellular location is the cytosol. The catalysed reaction is keto-D-fructose + NADH + H(+) = D-sorbitol + NAD(+). The enzyme catalyses ribitol + NAD(+) = D-ribulose + NADH + H(+). It catalyses the reaction xylitol + NAD(+) = D-xylulose + NADH + H(+). In terms of biological role, polyol dehydrogenase that catalyzes the NAD(+)-dependent oxidation of various sugar alcohols. Is mostly active with D-sorbitol (D-glucitol), ribitol and xylitol as substrates, leading to the C2-oxidized products D-fructose, D-ribulose and D-xylulose, respectively. To a lesser extent, can also oxidize arabitol, mannitol, lactitol and maltitol in vitro. Is required for sorbitol metabolism. Cannot use NADP(+) as the electron acceptor. This Arabidopsis thaliana (Mouse-ear cress) protein is Sorbitol dehydrogenase (SDH).